The chain runs to 283 residues: Pantothenate synthetase (283 aa).

Residue 26 to 33 coordinates ATP; sequence MGNLHDGH. The Proton donor role is filled by H33. Q57 is a binding site for (R)-pantoate. Q57 is a beta-alanine binding site. Residue 148 to 151 coordinates ATP; it reads GKKD. Q154 serves as a coordination point for (R)-pantoate. Residues A177 and 185 to 188 contribute to the ATP site; that span reads LSSR.

Belongs to the pantothenate synthetase family. Homodimer.

Its subcellular location is the cytoplasm. It catalyses the reaction (R)-pantoate + beta-alanine + ATP = (R)-pantothenate + AMP + diphosphate + H(+). Its pathway is cofactor biosynthesis; (R)-pantothenate biosynthesis; (R)-pantothenate from (R)-pantoate and beta-alanine: step 1/1. Functionally, catalyzes the condensation of pantoate with beta-alanine in an ATP-dependent reaction via a pantoyl-adenylate intermediate. This is Pantothenate synthetase from Delftia acidovorans (strain DSM 14801 / SPH-1).